The sequence spans 368 residues: 3-dehydroquinate synthase (368 aa).

NAD(+)-binding positions include 69–74, 103–107, 127–128, lysine 140, and lysine 149; these read DGEAYK, GVIGD, and TT. Positions 182, 245, and 262 each coordinate Zn(2+).

It belongs to the sugar phosphate cyclases superfamily. Dehydroquinate synthase family. Co(2+) is required as a cofactor. Zn(2+) serves as cofactor. The cofactor is NAD(+).

It is found in the cytoplasm. It carries out the reaction 7-phospho-2-dehydro-3-deoxy-D-arabino-heptonate = 3-dehydroquinate + phosphate. It participates in metabolic intermediate biosynthesis; chorismate biosynthesis; chorismate from D-erythrose 4-phosphate and phosphoenolpyruvate: step 2/7. Catalyzes the conversion of 3-deoxy-D-arabino-heptulosonate 7-phosphate (DAHP) to dehydroquinate (DHQ). This is 3-dehydroquinate synthase from Pseudomonas paraeruginosa (strain DSM 24068 / PA7) (Pseudomonas aeruginosa (strain PA7)).